The sequence spans 255 residues: 5'-nucleotidase SurE (255 aa).

A divalent metal cation contacts are provided by D8, D9, S40, and N92.

This sequence belongs to the SurE nucleotidase family. A divalent metal cation is required as a cofactor.

The protein resides in the cytoplasm. The enzyme catalyses a ribonucleoside 5'-phosphate + H2O = a ribonucleoside + phosphate. Its function is as follows. Nucleotidase that shows phosphatase activity on nucleoside 5'-monophosphates. This is 5'-nucleotidase SurE from Brucella suis (strain ATCC 23445 / NCTC 10510).